The following is a 122-amino-acid chain: Large ribosomal subunit protein uL14 (122 aa).

The protein belongs to the universal ribosomal protein uL14 family. Part of the 50S ribosomal subunit. Forms a cluster with proteins L3 and L19. In the 70S ribosome, L14 and L19 interact and together make contacts with the 16S rRNA in bridges B5 and B8.

Its function is as follows. Binds to 23S rRNA. Forms part of two intersubunit bridges in the 70S ribosome. The protein is Large ribosomal subunit protein uL14 of Neisseria gonorrhoeae (strain ATCC 700825 / FA 1090).